The primary structure comprises 421 residues: UDP-N-acetylglucosamine 1-carboxyvinyltransferase (421 aa).

22–23 provides a ligand contact to phosphoenolpyruvate; it reads KN. Arg93 serves as a coordination point for UDP-N-acetyl-alpha-D-glucosamine. Cys117 (proton donor) is an active-site residue. At Cys117 the chain carries 2-(S-cysteinyl)pyruvic acid O-phosphothioketal. UDP-N-acetyl-alpha-D-glucosamine-binding positions include 122–126, Asp308, and Ile330; that span reads RPVDL.

The protein belongs to the EPSP synthase family. MurA subfamily.

It localises to the cytoplasm. It carries out the reaction phosphoenolpyruvate + UDP-N-acetyl-alpha-D-glucosamine = UDP-N-acetyl-3-O-(1-carboxyvinyl)-alpha-D-glucosamine + phosphate. It functions in the pathway cell wall biogenesis; peptidoglycan biosynthesis. Cell wall formation. Adds enolpyruvyl to UDP-N-acetylglucosamine. This Pseudomonas savastanoi pv. phaseolicola (strain 1448A / Race 6) (Pseudomonas syringae pv. phaseolicola (strain 1448A / Race 6)) protein is UDP-N-acetylglucosamine 1-carboxyvinyltransferase.